The primary structure comprises 196 residues: MDLIARVAKNFEDSAQTKLNAVDMMAAPIAAAIETMTNCLINGGKILACGNGGSAGDSQHFAAELIGRFEAERQELAAIALTTDSSILTAIGNDYSFNQIFSKQVRGLGHSGDILLAISTSGNSGNIIEAIKAAHEHDMHVIALTGKGGGQIGEMLRDADIHLCVPADRTARIQETHLLVIHCLCDGIDALLLGVE.

The SIS domain maps to 36–196; sequence MTNCLINGGK…GIDALLLGVE (161 aa). Position 51–53 (51–53) interacts with substrate; the sequence is NGG. H60 and E64 together coordinate Zn(2+). Substrate is bound by residues E64, 93–94, 119–121, S124, and Q174; these read ND and STS. Zn(2+) is bound by residues Q174 and H182.

It belongs to the SIS family. GmhA subfamily. In terms of assembly, homotetramer. The cofactor is Zn(2+).

The protein localises to the cytoplasm. It catalyses the reaction 2 D-sedoheptulose 7-phosphate = D-glycero-alpha-D-manno-heptose 7-phosphate + D-glycero-beta-D-manno-heptose 7-phosphate. Its pathway is carbohydrate biosynthesis; D-glycero-D-manno-heptose 7-phosphate biosynthesis; D-glycero-alpha-D-manno-heptose 7-phosphate and D-glycero-beta-D-manno-heptose 7-phosphate from sedoheptulose 7-phosphate: step 1/1. Catalyzes the isomerization of sedoheptulose 7-phosphate in D-glycero-D-manno-heptose 7-phosphate. This is Phosphoheptose isomerase from Dechloromonas aromatica (strain RCB).